We begin with the raw amino-acid sequence, 393 residues long: MGFFIPQSSLGNLKLYKYQSDDRSFLSNHVLRPFWRKFATIFPLWMAPNLVTLLGFCFIIFNVLTTLYYDPYFDQESPRWTYFSYAIGLFLYQTFDACDGMHARRTGQQGPLGELFDHCIDSINTTLSMIPVCSMTGMGYTYMTIFSQFAILCSFYLSTWEEYHTHKLYLAEFCGPVEGIIVLCISFIAVGIYGPQTIWHTKVAQFSWQDFVFDVETVHLMYAFCTGALIFNIVTAHTNVVRYYESQSTKSATPSKTAENISKAVNGLLPFFAYFSSIFTLVLIQPSFISLALILSIGFSVAFVVGRMIIAHLTMQPFPMVNFPFLIPTIQLVLYAFMVYVLDYQKGSIVSALVWMGLGLTLAIHGMFINDIIYDITTFLDIYALSIKHPKEI.

The Lumenal portion of the chain corresponds to 1–40 (MGFFIPQSSLGNLKLYKYQSDDRSFLSNHVLRPFWRKFAT). Residues 41-61 (IFPLWMAPNLVTLLGFCFIIF) traverse the membrane as a helical segment. The Cytoplasmic segment spans residues 62 to 172 (NVLTTLYYDP…YHTHKLYLAE (111 aa)). A helical membrane pass occupies residues 173–193 (FCGPVEGIIVLCISFIAVGIY). The Lumenal portion of the chain corresponds to 194-210 (GPQTIWHTKVAQFSWQD). Residues 211–231 (FVFDVETVHLMYAFCTGALIF) form a helical membrane-spanning segment. Residues 232–263 (NIVTAHTNVVRYYESQSTKSATPSKTAENISK) are Cytoplasmic-facing. Residues 264–284 (AVNGLLPFFAYFSSIFTLVLI) traverse the membrane as a helical segment. Residue Gln285 is a topological domain, lumenal. Residues 286-306 (PSFISLALILSIGFSVAFVVG) traverse the membrane as a helical segment. Topologically, residues 307–320 (RMIIAHLTMQPFPM) are cytoplasmic. The helical transmembrane segment at 321-341 (VNFPFLIPTIQLVLYAFMVYV) threads the bilayer. At 342 to 348 (LDYQKGS) the chain is on the lumenal side. A helical transmembrane segment spans residues 349–369 (IVSALVWMGLGLTLAIHGMFI). Topologically, residues 370 to 393 (NDIIYDITTFLDIYALSIKHPKEI) are cytoplasmic.

It belongs to the CDP-alcohol phosphatidyltransferase class-I family. The cofactor is Mg(2+).

It is found in the microsome membrane. Its subcellular location is the endoplasmic reticulum membrane. The protein localises to the mitochondrion outer membrane. The catalysed reaction is CDP-choline + a 1,2-diacyl-sn-glycerol = a 1,2-diacyl-sn-glycero-3-phosphocholine + CMP + H(+). The enzyme catalyses CDP-N,N-dimethylethanolamine + a 1,2-diacyl-sn-glycerol = a 1,2-diacyl-sn-glycero-3-phospho-N,N-dimethylethanolamine + CMP + H(+). The protein operates within phospholipid metabolism; phosphatidylcholine biosynthesis; phosphatidylcholine from phosphocholine: step 2/2. Requires a divalent cation activator, and is inhibited by CMP. Activated by phospholipids, especially phosphatidylcholine. Its function is as follows. Catalyzes the final step in the CDP-choline route leading to phosphatidylcholin (PC). Preferentially uses CDP-monomethylethanolamine as aminoalcohol substrate. Shows highest activity toward di- and mono-unsaturated diacylglycerol species as lipid substrates. The CDP-choline pathway only contributes to net PC synthesis if exogenous choline is present. In its absence, this pathway recycles choline from PC turnover and may contribute to maintaining the proper PC species composition. The protein is Cholinephosphotransferase 1 (CPT1) of Saccharomyces cerevisiae (strain ATCC 204508 / S288c) (Baker's yeast).